A 322-amino-acid chain; its full sequence is Undecaprenyl-phosphate 4-deoxy-4-formamido-L-arabinose transferase (322 aa).

Residues 1 to 235 lie on the Cytoplasmic side of the membrane; sequence MFEIHPVKKV…TCLTTTPLRM (235 aa). A helical transmembrane segment spans residues 236-256; the sequence is LSLLGSIIAIGGFSIAVLLVI. Residues 257–269 are Periplasmic-facing; that stretch reads LRLTFGPQWAAEG. A helical transmembrane segment spans residues 270-290; it reads VFMLFAVLFTFIGAQFIGMGL. At 291–322 the chain is on the cytoplasmic side; the sequence is LGEYIGRIYTDVRARPRYFVQQVIRPSSKENE.

The protein belongs to the glycosyltransferase 2 family.

It localises to the cell inner membrane. The enzyme catalyses UDP-4-deoxy-4-formamido-beta-L-arabinose + di-trans,octa-cis-undecaprenyl phosphate = 4-deoxy-4-formamido-alpha-L-arabinopyranosyl di-trans,octa-cis-undecaprenyl phosphate + UDP. It participates in glycolipid biosynthesis; 4-amino-4-deoxy-alpha-L-arabinose undecaprenyl phosphate biosynthesis; 4-amino-4-deoxy-alpha-L-arabinose undecaprenyl phosphate from UDP-4-deoxy-4-formamido-beta-L-arabinose and undecaprenyl phosphate: step 1/2. The protein operates within bacterial outer membrane biogenesis; lipopolysaccharide biosynthesis. In terms of biological role, catalyzes the transfer of 4-deoxy-4-formamido-L-arabinose from UDP to undecaprenyl phosphate. The modified arabinose is attached to lipid A and is required for resistance to polymyxin and cationic antimicrobial peptides. The chain is Undecaprenyl-phosphate 4-deoxy-4-formamido-L-arabinose transferase from Escherichia coli O17:K52:H18 (strain UMN026 / ExPEC).